Reading from the N-terminus, the 77-residue chain is Cysteine-rich protein 1 (77 aa).

In terms of domain architecture, LIM zinc-binding spans 2–63 (PKCPKCSKEV…HPCYAAMFGP (62 aa)). K9 and K22 each carry N6-acetyllysine. The residue at position 68 (R68) is an Omega-N-methylarginine.

Seems to have a role in zinc absorption and may function as an intracellular zinc transport protein. This is Cysteine-rich protein 1 (CRIP1) from Bos taurus (Bovine).